We begin with the raw amino-acid sequence, 157 residues long: Transcription elongation factor GreA (157 aa).

The protein belongs to the GreA/GreB family.

Its function is as follows. Necessary for efficient RNA polymerase transcription elongation past template-encoded arresting sites. The arresting sites in DNA have the property of trapping a certain fraction of elongating RNA polymerases that pass through, resulting in locked ternary complexes. Cleavage of the nascent transcript by cleavage factors such as GreA or GreB allows the resumption of elongation from the new 3'terminus. GreA releases sequences of 2 to 3 nucleotides. In Chelativorans sp. (strain BNC1), this protein is Transcription elongation factor GreA.